Reading from the N-terminus, the 148-residue chain is Ribonuclease H (148 aa).

Residues 3 to 144 (DKEQVVIYTD…ADQLANRGVA (142 aa)) enclose the RNase H type-1 domain. Positions 12, 50, 72, and 136 each coordinate Mg(2+). The disordered stretch occupies residues 125–148 (GHTGDPGNERADQLANRGVAELPR).

Belongs to the RNase H family. Monomer. It depends on Mg(2+) as a cofactor.

The protein resides in the cytoplasm. It catalyses the reaction Endonucleolytic cleavage to 5'-phosphomonoester.. Endonuclease that specifically degrades the RNA of RNA-DNA hybrids. This chain is Ribonuclease H, found in Pseudomonas aeruginosa (strain LESB58).